Here is a 310-residue protein sequence, read N- to C-terminus: Hydroxyacylglutathione hydrolase, mitochondrial (310 aa).

Zn(2+) is bound by residues His104, His106, Asp108, His109, His160, and Asp184. Substrate-binding positions include 193-195 (KFF), 223-225 (HEY), and 299-302 (RKEK). His223 lines the Zn(2+) pocket.

It belongs to the metallo-beta-lactamase superfamily. Glyoxalase II family. As to quaternary structure, monomer. Zn(2+) serves as cofactor.

It is found in the mitochondrion matrix. Its subcellular location is the cytoplasm. The catalysed reaction is an S-(2-hydroxyacyl)glutathione + H2O = a 2-hydroxy carboxylate + glutathione + H(+). It carries out the reaction (R)-S-lactoylglutathione + H2O = (R)-lactate + glutathione + H(+). Thiolesterase that catalyzes the hydrolysis of S-D-lactoyl-glutathione to form glutathione and D-lactic acid. This Gallus gallus (Chicken) protein is Hydroxyacylglutathione hydrolase, mitochondrial (HAGH).